The sequence spans 240 residues: 1-(5-phosphoribosyl)-5-[(5-phosphoribosylamino)methylideneamino] imidazole-4-carboxamide isomerase (240 aa).

Catalysis depends on D8, which acts as the Proton acceptor. D129 acts as the Proton donor in catalysis.

This sequence belongs to the HisA/HisF family.

The protein resides in the cytoplasm. It catalyses the reaction 1-(5-phospho-beta-D-ribosyl)-5-[(5-phospho-beta-D-ribosylamino)methylideneamino]imidazole-4-carboxamide = 5-[(5-phospho-1-deoxy-D-ribulos-1-ylimino)methylamino]-1-(5-phospho-beta-D-ribosyl)imidazole-4-carboxamide. Its pathway is amino-acid biosynthesis; L-histidine biosynthesis; L-histidine from 5-phospho-alpha-D-ribose 1-diphosphate: step 4/9. This is 1-(5-phosphoribosyl)-5-[(5-phosphoribosylamino)methylideneamino] imidazole-4-carboxamide isomerase from Oceanobacillus iheyensis (strain DSM 14371 / CIP 107618 / JCM 11309 / KCTC 3954 / HTE831).